A 2524-amino-acid polypeptide reads, in one-letter code: MDRIGLAVLLCSLPVLTQGLRCTQTAEMCLNGGRCEMTPGGTGVCLCGNLYFGERCQFPNPCTIKNQCMNFGTCEPVLQGNAIDFICHCPVGFTDKVCLTPVDNACVNNPCRNGGTCELLNSVTEYKCRCPPGWTGDSCQQADPCASNPCANGGKCLPFEIQYICKCPPGFHGATCKQDINECSQNPCKNGGQCINEFGSYRCTCQNRFTGRNCDEPYVPCNPSPCLNGGTCRQTDDTSYDCTCLPGFSGQNCEENIDDCPSNNCRNGGTCVDGVNTYNCQCPPDWTGQYCTEDVDECQLMPNACQNGGTCHNTYGGYNCVCVNGWTGEDCSENIDDCANAACHSGATCHDRVASFYCECPHGRTGLLCHLDNACISNPCNEGSNCDTNPVNGKAICTCPPGYTGPACNNDVDECSLGANPCEHGGRCTNTLGSFQCNCPQGYAGPRCEIDVNECLSNPCQNDSTCLDQIGEFQCICMPGYEGLYCETNIDECASNPCLHNGKCIDKINEFRCDCPTGFSGNLCQHDFDECTSTPCKNGAKCLDGPNSYTCQCTEGFTGRHCEQDINECIPDPCHYGTCKDGIATFTCLCRPGYTGRLCDNDINECLSKPCLNGGQCTDRENGYICTCPKGTTGVNCETKIDDCASNLCDNGKCIDKIDGYECTCEPGYTGKLCNININECDSNPCRNGGTCKDQINGFTCVCPDGYHDHMCLSEVNECNSNPCIHGACHDGVNGYKCDCEAGWSGSNCDINNNECESNPCMNGGTCKDMTGAYICTCKAGFSGPNCQTNINECSSNPCLNHGTCIDDVAGYKCNCMLPYTGAICEAVLAPCAGSPCKNGGRCKESEDFETFSCECPPGWQGQTCEIDMNECVNRPCRNGATCQNTNGSYKCNCKPGYTGRNCEMDIDDCQPNPCHNGGSCSDGINMFFCNCPAGFRGPKCEEDINECASNPCKNGANCTDCVNSYTCTCQPGFSGIHCESNTPDCTESSCFNGGTCIDGINTFTCQCPPGFTGSYCQHDINECDSKPCLNGGTCQDSYGTYKCTCPQGYTGLNCQNLVRWCDSSPCKNGGKCWQTNNFYRCECKSGWTGVYCDVPSVSCEVAAKQQGVDIVHLCRNSGMCVDTGNTHFCRCQAGYTGSYCEEQVDECSPNPCQNGATCTDYLGGYSCECVAGYHGVNCSEEINECLSHPCQNGGTCIDLINTYKCSCPRGTQGVHCEINVDDCTPFYDSFTLEPKCFNNGKCIDRVGGYNCICPPGFVGERCEGDVNECLSNPCDSRGTQNCIQLVNDYRCECRQGFTGRRCESVVDGCKGMPCRNGGTCAVASNTERGFICKCPPGFDGATCEYDSRTCSNLRCQNGGTCISVLTSSKCVCSEGYTGATCQYPVISPCASHPCYNGGTCQFFAEEPFFQCFCPKNFNGLFCHILDYEFPGGLGKNITPPDNDDICENEQCSELADNKVCNANCNNHACGWDGGDCSLNFNDPWKNCTQSLQCWKYFNDGKCDSQCNNTGCLYDGFDCQKVEVQCNPLYDQYCKDHFQDGHCDQGCNNAECEWDGLDCANMPENLAEGTLVLVVLMPPERLKNNSVNFLRELSRVLHTNVVFKKDSKGEYKIYPYYGNEEELKKHHIKRSTDYWSDAPSAIFSTMKESILLGRHRRELDEMEVRGSIVYLEIDNRQCYKSSSQCFNSATDVAAFLGALASLGSLDTLSYKIEAVKSENMETPKPSTLYPMLSMLVIPLLIIFVFMMVIVNKKRRREHGQLWFPDGFIPKEPSKKKRRDRLGEDSVGLKPIKNMTDGSFMDDNQNEWGDEETLENKRFRFEEQVILPELVDDKTDPRQWTRQHLDAADLRISSMAPTPPQGEIEADCMDVNVRGPDGFTPLMIASCSGGGLETGNSEEEEDASANMISDFIGQGAQLHNQTDRTGETALHLAARYARADAAKRLLESSADANVQDNMGRTPLHAAVAADAQGVFQILIRNRATDLDARMFDGTTPLILAARLAVEGMVEELINAHADVNAVDEFGKSALHWAAAVNNVDAAAVLLKNSANKDMQNNKEETSLFLAAREGSYETAKVLLDHYANRDITDHMDRLPRDIAQERMHHDIVHLLDEYNLVKSPTLHNGPLGATTLSPPICSPNGYMGNMKPSVQSKKARKPSIKGNGCKEAKELKARRKKSQDGKTTLLDSGSSGVLSPVDSLESTHGYLSDVSSPPLMTSPFQQSPSMPLNHLTSMPESQLGMNHINMATKQEMAAGSNRMAFDAMVPRLTHLNASSPNTIMSNGSMHFTVGGAPTMNSQCDWLARLQNGMVQNQYDPIRNGIQQGNAQQAQALQHGLMTSLHNGLPATTLSQMMTYQAMPNTRLANQPHLMQAQQMQQQQNLQLHQSMQQQHHNSSTTSTHINSPFCSSDISQTDLQQMSSNNIHSVMPQDTQIFAASLPSNLTQSMTTAQFLTPPSQHSYSSPMDNTPSHQLQVPDHPFLTPSPESPDQWSSSSPHSNMSDWSEGISSPPTSMQPQRTHIPEAFK.

Positions 1–19 are cleaved as a signal peptide; sequence MDRIGLAVLLCSLPVLTQG. EGF-like domains lie at 20–57, 58–99, 102–140, and 141–177; these read LRCTQTAEMCLNGGRCEMTPGGTGVCLCGNLYFGERCQ, FPNP…KVCL, VDNACVNNPCRNGGTCELLNSVTEYKCRCPPGWTGDSCQ, and QADPCASNPCANGGKCLPFEIQYICKCPPGFHGATCK. Over 20-1729 the chain is Extracellular; it reads LRCTQTAEMC…METPKPSTLY (1710 aa). 33 disulfide bridges follow: C22–C35, C29–C45, C47–C56, C62–C74, C68–C87, C89–C98, C106–C117, C111–C128, C130–C139, C145–C156, C150–C165, C167–C176, C183–C194, C188–C203, C205–C214, C221–C232, C226–C242, C244–C253, C260–C271, C265–C280, C282–C291, C298–C311, C305–C320, C322–C331, C338–C349, C343–C358, C360–C369, C375–C386, C380–C397, C399–C408, C415–C428, C422–C437, and C439–C448. The EGF-like 5; calcium-binding domain occupies 179-215; it reads DINECSQNPCKNGGQCINEFGSYRCTCQNRFTGRNCD. In terms of domain architecture, EGF-like 6 spans 217 to 254; it reads PYVPCNPSPCLNGGTCRQTDDTSYDCTCLPGFSGQNCE. T231 carries O-linked (Fuc...) threonine; alternate glycosylation. T231 carries an O-linked (GalNAc...) threonine; alternate glycan. The region spanning 256–292 is the EGF-like 7; calcium-binding domain; it reads NIDDCPSNNCRNGGTCVDGVNTYNCQCPPDWTGQYCT. One can recognise an EGF-like 8; calcium-binding domain in the interval 294 to 332; it reads DVDECQLMPNACQNGGTCHNTYGGYNCVCVNGWTGEDCS. In terms of domain architecture, EGF-like 9; calcium-binding spans 334 to 370; that stretch reads NIDDCANAACHSGATCHDRVASFYCECPHGRTGLLCH. One can recognise an EGF-like 10 domain in the interval 371-409; sequence LDNACISNPCNEGSNCDTNPVNGKAICTCPPGYTGPACN. One can recognise an EGF-like 11; calcium-binding domain in the interval 411-449; sequence DVDECSLGANPCEHGGRCTNTLGSFQCNCPQGYAGPRCE. Residues T431 and S434 each coordinate Ca(2+). S434 carries an O-linked (Glc...) serine glycan. Ca(2+) is bound by residues D451, V452, and E454. In terms of domain architecture, EGF-like 12; calcium-binding spans 451–487; the sequence is DVNECLSNPCQNDSTCLDQIGEFQCICMPGYEGLYCE. Disulfide bonds link C455-C466, C460-C475, and C477-C486. The O-linked (Glc...) serine glycan is linked to S457. The N-linked (GlcNAc...) asparagine glycan is linked to N462. T465 is a glycosylation site (O-linked (Fuc...) threonine). Ca(2+) is bound by residues D468 and Q469. Ca(2+) contacts are provided by N489, I490, and E492. In terms of domain architecture, EGF-like 13; calcium-binding spans 489-525; sequence NIDECASNPCLHNGKCIDKINEFRCDCPTGFSGNLCQ. Cystine bridges form between C493-C504, C498-C513, C515-C524, C531-C542, C536-C551, C553-C562, C569-C579, C574-C588, C590-C599, C606-C617, C611-C626, C628-C637, C644-C654, C649-C663, C665-C674, C681-C692, C686-C701, C703-C712, C719-C729, C724-C738, C740-C749, C756-C767, C761-C776, C778-C787, C794-C805, C799-C814, C816-C825, C832-C843, C837-C854, C856-C865, C872-C883, C877-C892, C894-C903, C910-C921, C915-C930, C932-C941, C948-C959, C953-C968, C970-C979, C986-C997, C991-C1006, C1008-C1017, C1024-C1035, C1029-C1044, C1046-C1055, C1062-C1073, C1067-C1082, C1084-C1093, C1100-C1121, C1115-C1130, C1132-C1141, C1148-C1159, C1153-C1168, C1170-C1179, C1186-C1197, C1191-C1206, C1208-C1217, C1224-C1243, C1237-C1252, C1254-C1263, C1270-C1283, C1275-C1292, C1294-C1303, C1310-C1321, C1315-C1333, C1335-C1344, C1351-C1362, C1356-C1371, C1373-C1382, C1390-C1401, C1395-C1412, C1414-C1423, C1447-C1470, C1452-C1465, and C1461-C1477. A glycan (O-linked (Glc...) serine) is linked at S495. 2 residues coordinate Ca(2+): D506 and K507. In terms of domain architecture, EGF-like 14; calcium-binding spans 527–563; that stretch reads DFDECTSTPCKNGAKCLDGPNSYTCQCTEGFTGRHCE. Residues 565-600 form the EGF-like 15; calcium-binding domain; the sequence is DINECIPDPCHYGTCKDGIATFTCLCRPGYTGRLCD. In terms of domain architecture, EGF-like 16; calcium-binding spans 602–638; sequence DINECLSKPCLNGGQCTDRENGYICTCPKGTTGVNCE. An EGF-like 17 domain is found at 640 to 675; it reads KIDDCASNLCDNGKCIDKIDGYECTCEPGYTGKLCN. The region spanning 677-713 is the EGF-like 18; calcium-binding domain; the sequence is NINECDSNPCRNGGTCKDQINGFTCVCPDGYHDHMCL. An EGF-like 19; calcium-binding domain is found at 715–750; the sequence is EVNECNSNPCIHGACHDGVNGYKCDCEAGWSGSNCD. The EGF-like 20; calcium-binding domain maps to 752–788; sequence NNNECESNPCMNGGTCKDMTGAYICTCKAGFSGPNCQ. In terms of domain architecture, EGF-like 21; calcium-binding spans 790 to 826; that stretch reads NINECSSNPCLNHGTCIDDVAGYKCNCMLPYTGAICE. The region spanning 828 to 866 is the EGF-like 22 domain; sequence VLAPCAGSPCKNGGRCKESEDFETFSCECPPGWQGQTCE. The region spanning 868–904 is the EGF-like 23; calcium-binding domain; it reads DMNECVNRPCRNGATCQNTNGSYKCNCKPGYTGRNCE. N887 carries N-linked (GlcNAc...) asparagine glycosylation. An EGF-like 24; calcium-binding domain is found at 906-942; that stretch reads DIDDCQPNPCHNGGSCSDGINMFFCNCPAGFRGPKCE. One can recognise an EGF-like 25; calcium-binding domain in the interval 944–980; that stretch reads DINECASNPCKNGANCTDCVNSYTCTCQPGFSGIHCE. N-linked (GlcNAc...) asparagine glycosylation occurs at N958. The EGF-like 26 domain maps to 982-1018; sequence NTPDCTESSCFNGGTCIDGINTFTCQCPPGFTGSYCQ. The 37-residue stretch at 1020–1056 folds into the EGF-like 27; calcium-binding domain; that stretch reads DINECDSKPCLNGGTCQDSYGTYKCTCPQGYTGLNCQ. EGF-like domains lie at 1058–1094 and 1096–1142; these read LVRWCDSSPCKNGGKCWQTNNFYRCECKSGWTGVYCD and PSVS…SYCE. Positions 1144 to 1180 constitute an EGF-like 30; calcium-binding domain; the sequence is QVDECSPNPCQNGATCTDYLGGYSCECVAGYHGVNCS. N1178 carries an N-linked (GlcNAc...) asparagine glycan. Residues 1182–1218 form the EGF-like 31; calcium-binding domain; it reads EINECLSHPCQNGGTCIDLINTYKCSCPRGTQGVHCE. One can recognise an EGF-like 32; calcium-binding domain in the interval 1220 to 1264; that stretch reads NVDDCTPFYDSFTLEPKCFNNGKCIDRVGGYNCICPPGFVGERCE. EGF-like domains are found at residues 1266–1304, 1306–1346, 1347–1383, and 1386–1424; these read DVNECLSNPCDSRGTQNCIQLVNDYRCECRQGFTGRRCE, VVDG…TCEY, DSRTCSNLRCQNGGTCISVLTSSKCVCSEGYTGATCQ, and VISPCASHPCYNGGTCQFFAEEPFFQCFCPKNFNGLFCH. An O-linked (Fuc...) threonine; alternate glycan is attached at T1400. T1400 carries an O-linked (GalNAc...) threonine; alternate glycan. LNR repeat units follow at residues 1447–1487, 1488–1529, and 1530–1564; these read CENE…PWKN, CTQS…CNPL, and YDQYCKDHFQDGHCDQGCNNAECEWDGLDCANMPE. The N-linked (GlcNAc...) asparagine glycan is linked to N1487. 5 cysteine pairs are disulfide-bonded: C1488-C1512, C1494-C1507, C1503-C1519, C1534-C1547, and C1543-C1559. N1508 is a glycosylation site (N-linked (GlcNAc...) asparagine). N1584 is a glycosylation site (N-linked (GlcNAc...) asparagine). Residues 1730 to 1750 traverse the membrane as a helical segment; the sequence is PMLSMLVIPLLIIFVFMMVIV. Residues 1751–2524 lie on the Cytoplasmic side of the membrane; sequence NKKRRREHGQ…QRTHIPEAFK (774 aa). ANK repeat units lie at residues 1876–1919, 1924–1953, 1957–1987, 1991–2020, 2024–2053, and 2057–2086; these read DGFT…QLHN, TGETALHLAARYARADAAKRLLESSADANV, MGRTPLHAAVAADAQGVFQILIRNRATDLDA, DGTTPLILAARLAVEGMVEELINAHADVNA, FGKSALHWAAAVNNVDAAAVLLKNSANKDM, and KEETSLFLAAREGSYETAKVLLDHYANRDI. Disordered stretches follow at residues 2144-2230, 2369-2407, and 2451-2524; these read NMKP…LNHL, MQAQQMQQQQNLQLHQSMQQQHHNSSTTSTHINSPFCSS, and LTPP…EAFK. Composition is skewed to polar residues over residues 2180-2192 and 2208-2230; these read GKTTLLDSGSSGV and DVSSPPLMTSPFQQSPSMPLNHL. The segment covering 2369–2394 has biased composition (low complexity); it reads MQAQQMQQQQNLQLHQSMQQQHHNSS. Polar residues-rich tracts occupy residues 2395 to 2407 and 2451 to 2471; these read TTSTHINSPFCSS and LTPPSQHSYSSPMDNTPSHQL. The segment covering 2481-2496 has biased composition (low complexity); sequence PSPESPDQWSSSSPHS. Residues 2497–2516 show a composition bias toward polar residues; the sequence is NMSDWSEGISSPPTSMQPQR.

The protein belongs to the NOTCH family. As to quaternary structure, forms a ternary complex with nrarp and rbpj/suh. O-glycosylated on the EGF-like domains. Contains both O-linked fucose and O-linked glucose. O-linked glycosylation by galnt11 is involved in determination of left/right symmetry: glycosylation promotes activation of notch1, possibly by promoting cleavage by adam17, modulating the balance between motile and immotile (sensory) cilia at the left-right organiser (LRO). In terms of processing, synthesized in the endoplasmic reticulum as an inactive form which is proteolytically cleaved by a furin-like convertase in the trans-Golgi network before it reaches the plasma membrane to yield an active, ligand-accessible form. Cleavage results in a C-terminal fragment N(TM) and a N-terminal fragment N(EC). Following ligand binding, it is cleaved by adam17 to yield a membrane-associated intermediate fragment called notch extracellular truncation (NEXT). Following endocytosis, this fragment is then cleaved by presenilin dependent gamma-secretase to release a Notch-derived peptide containing the intracellular domain (NICD) from the membrane.

The protein localises to the cell membrane. It localises to the nucleus. In terms of biological role, functions as a receptor for membrane-bound ligands Jagged-1 (JAG1), Jagged-2 (JAG2) and Delta-1 (DLL1) to regulate cell-fate determination. Upon ligand activation through the released notch intracellular domain (NICD) it forms a transcriptional activator complex with RBPJ/RBPSUH and activates genes of the enhancer of split locus. Affects the implementation of differentiation, proliferation and apoptotic programs. Involved in angiogenesis; negatively regulates endothelial cell proliferation and migration and angiogenic sprouting. Involved in the maturation of both CD4(+) and CD8(+) cells in the thymus. Important for follicular differentiation and possibly cell fate selection within the follicle. During cerebellar development, functions as a receptor for neuronal DNER and is involved in the differentiation of Bergmann glia. Represses neuronal and myogenic differentiation. May play an essential role in postimplantation development, probably in some aspect of cell specification and/or differentiation. May be involved in mesoderm development, somite formation and neurogenesis. Involved in determination of left/right symmetry by modulating the balance between motile and immotile (sensory) cilia at the left-right organiser (LRO). The polypeptide is Neurogenic locus notch homolog protein 1 (notch1) (Xenopus laevis (African clawed frog)).